Here is a 426-residue protein sequence, read N- to C-terminus: Neuromedin-U receptor 1 (426 aa).

Topologically, residues 1 to 65 (MTPLCLNCSV…QTELFMPICA (65 aa)) are extracellular. Asn7, Asn27, and Asn41 each carry an N-linked (GlcNAc...) asparagine glycan. A helical membrane pass occupies residues 66-86 (TYLLIFVVGAVGNGLTCLVIL). At 87–97 (RHKAMRTPTNY) the chain is on the cytoplasmic side. The chain crosses the membrane as a helical span at residues 98–118 (YLFSLAVSDLLVLLVGLPLEL). The Extracellular portion of the chain corresponds to 119-138 (YEMWHNYPFLLGVGGCYFRT). Cysteines 134 and 219 form a disulfide. Residues 139-161 (LLFEMVCLASVLNVTALSVERYV) form a helical membrane-spanning segment. Residues 162–181 (AVVHPLQARSMVTRAHVRRV) lie on the Cytoplasmic side of the membrane. The chain crosses the membrane as a helical span at residues 182 to 202 (LGAVWGLAMLCSLPNTSLHGI). Over 203-235 (RQLHVPCRGPVPDSAVCMLVRPRALYNMVVQTT) the chain is Extracellular. A helical transmembrane segment spans residues 236–256 (ALLFFCLPMAIMSVLYLLIGL). The Cytoplasmic segment spans residues 257–294 (RLRRERLLLMQEAKGRGSAAARSRYTCRLQQHDRGRRQ). A helical transmembrane segment spans residues 295–315 (VTKMLFVLVVVFGICWAPFHA). The Extracellular segment spans residues 316–338 (DRVMWSVVSQWTDGLHLAFQHVH). The chain crosses the membrane as a helical span at residues 339 to 359 (VISGIFFYLGSAANPVLYSLM). Residues 360–426 (SSRFRETFQE…PEAQQETDPS (67 aa)) lie on the Cytoplasmic side of the membrane.

Belongs to the G-protein coupled receptor 1 family. In terms of tissue distribution, expressed in greatest abundance in peripheral organs, particularly in elements of the gastrointestinal and urogenital systems with highest levels in testes. In central nervous system structures express levels are much lower than those seen in peripheral organs. Within the CNS, has been detected in highest abundance in the cerebellum, dorsal root ganglia, hippocampus, and spinal cord.

Its subcellular location is the cell membrane. Receptor for the neuromedin-U and neuromedin-S neuropeptides. The sequence is that of Neuromedin-U receptor 1 (NMUR1) from Homo sapiens (Human).